The sequence spans 487 residues: Signal recognition particle subunit SRP54 (487 aa).

Residues 1–295 (MVLSQLGSSL…DAESFVRKLL (295 aa)) are G-domain. Residues 108–115 (GLQGAGKT), 190–194 (DTSGR), and 248–251 (TKLD) contribute to the GTP site. The interval 296 to 487 (GMGDLKGIAK…LGGTGKKGKK (192 aa)) is M-domain.

Belongs to the GTP-binding SRP family. SRP54 subfamily. Component of a signal recognition particle (SRP) complex that consists of a 7SL RNA molecule of 300 nucleotides and six protein subunits: SRP72, SRP68, SRP54, SRP19, SRP14 and SRP9.

The protein localises to the cytoplasm. Its subcellular location is the endoplasmic reticulum. The catalysed reaction is GTP + H2O = GDP + phosphate + H(+). Functionally, component of the signal recognition particle (SRP) complex, a ribonucleoprotein complex that mediates the cotranslational targeting of secretory and membrane proteins to the endoplasmic reticulum (ER). As part of the SRP complex, associates with the SRP receptor (SR) component SRPRA to target secretory proteins to the endoplasmic reticulum membrane. Binds to the signal sequence of presecretory proteins when they emerge from the ribosomes. Displays basal GTPase activity, and stimulates reciprocal GTPase activation of the SR subunit SRPRA. Forms a guanosine 5'-triphosphate (GTP)-dependent complex with the SR subunit SRPRA. SR compaction and GTPase mediated rearrangement of SR drive SRP-mediated cotranslational protein translocation into the ER. Requires the presence of SRP9/SRP14 and/or SRP19 to stably interact with RNA. The polypeptide is Signal recognition particle subunit SRP54 (Entamoeba histolytica (strain ATCC 30459 / HM-1:IMSS / ABRM)).